The primary structure comprises 770 residues: Protein argonaute (770 aa).

Positions 1 to 151 are N-terminal domain; it reads MKAKVVINLV…VIHIIHQIQS (151 aa). One can recognise a PAZ domain in the interval 154–272; sequence TLWELVNKDP…LLPQLVVPTY (119 aa). Residues 276–361 are interdomain connector; sequence QLESDVAKEI…SQLLLWTNYS (86 aa). The interval 362–544 is mid domain; it reads RKYPVILPYE…LSKLGVKYYV (183 aa). Residues 473–756 form the Piwi domain; that stretch reads GLAFIAARNK…FANAIRNEWK (284 aa). Active-site residues include Asp-558, Glu-596, Asp-628, and His-745. Asp-558 provides a ligand contact to Mn(2+). The Mn(2+) site is built by Asp-628, His-745, and Val-770.

It belongs to the argonaute family. Long pAgo subfamily. Monomer. Mn(2+) is required as a cofactor.

With respect to regulation, inhibited at greater than 500 mM NaCl. Functionally, a DNA-guided ssDNA endonuclease that may play a role in defense against invading mobile genetic elements. Uses short 5'-phospho-ssDNA sequences as guides (gDNA) to bind complementary target strands, resulting in cleavage of the target DNA (tDNA). Endonucleolytically cleaves DNA in short dsDNA (the gDNA indicates where to cleave on the tDNA). Efficient guide-dependent target DNA cleavage requires a minimal gDNA length of 15 nucleotides (nt) and works up to at least 31 nt. Overexpression decreases plasmid transformation efficiency. Has no appreciable activity with gRNA or on target RNA. Also has guide-independent activity on plasmid DNA called 'chopping'. The cleavage site is 10 nucleotides (nt) downstream of the target residue base-paired with the 5'-end of the gDNA, cleavage is insensitive to adenine methylation. DNA cleavage produces 5'-phosphomonoesters (as it can be ligated by T4 DNA ligase). This chain is Protein argonaute, found in Pyrococcus furiosus (strain ATCC 43587 / DSM 3638 / JCM 8422 / Vc1).